We begin with the raw amino-acid sequence, 379 residues long: Stimulator of interferon genes protein (379 aa).

The Cytoplasmic segment spans residues methionine 1–arginine 17. The mediates interaction with ZDHHC1 and ZDHHC11 stretch occupies residues methionine 1–leucine 190. Residues phenylalanine 18–tryptophan 34 form a helical membrane-spanning segment. Residues methionine 35–leucine 44 lie on the Lumenal side of the membrane. A helical membrane pass occupies residues histidine 45–glutamate 69. Residues leucine 70–serine 91 are Cytoplasmic-facing. Residue cysteine 88 is the site of S-palmitoyl cysteine attachment. Residues proline 92–tyrosine 106 traverse the membrane as a helical segment. Residues cysteine 107–arginine 116 lie on the Lumenal side of the membrane. A helical membrane pass occupies residues leucine 117–leucine 134. Topologically, residues aspartate 135–isoleucine 379 are cytoplasmic. Residue lysine 151 forms a Glycyl lysine isopeptide (Lys-Gly) (interchain with G-Cter in ubiquitin) linkage. The tract at residues phenylalanine 153–glutamate 340 is cyclic dinucleotide-binding domain (CBD). Position 162–167 (serine 162–tyrosine 167) interacts with 2',3'-cGAMP. Residue glycine 166 coordinates 3',3'-c-di-GMP. Tyrosine 167 is a 2',3'-cUAMP binding site. Residue lysine 236 forms a Glycyl lysine isopeptide (Lys-Gly) (interchain with G-Cter in ubiquitin) linkage. A 2',3'-cUAMP-binding site is contributed by arginine 238. 2',3'-cGAMP-binding positions include arginine 238 to serine 241 and threonine 263. 3',3'-c-di-GMP contacts are provided by residues arginine 238–serine 241 and threonine 263. The residue at position 241 (serine 241) is a Phosphoserine. Threonine 263 serves as a coordination point for 2',3'-cUAMP. Lysine 338 is covalently cross-linked (Glycyl lysine isopeptide (Lys-Gly) (interchain with G-Cter in SUMO)). Positions glutamate 340–isoleucine 379 are C-terminal tail (CTT). Position 355 is a phosphoserine (serine 355). Residues serine 358 and serine 366 each carry the phosphoserine; by TBK1 modification. The pLxIS motif motif lies at leucine 363–serine 366.

It belongs to the STING family. Homodimer; forms a homodimer in absence of cyclic nucleotide (c-di-GMP or cGAMP); 'Lys-63'-linked ubiquitination at Lys-151 is required for homodimerization. Homotetramer; in presence of cyclic nucleotide (c-di-GMP or cGAMP), forms tetramers and higher-order oligomers through side-by-side packing. Interacts (when phosphorylated) with IRF3; following activation and phosphorylation on the pLxIS motif by TBK1, recruits IRF3. Interacts with RIGI, MAVS and SSR2. Interacts with RNF5 and TRIM56. Interacts with TBK1; when homodimer, leading to subsequent production of IFN-beta. Interacts with IFIT1 and IFIT2. Interacts with TRIM29; this interaction induces STING1 ubiquitination and subsequent degradation. Associates with the MHC-II complex. Interacts with STEEP1; interaction takes place upon cGAMP-activation and STING1 phosphorylation by MAP3K7/TAK1 and promotes STING1 translocation to COPII vesicles. Interacts with SEC24A, SEC24B and SEC24C; promoting translocation to COPII vesicles. Interacts (when ubiquitinated) with SQSTM1; leading to relocalization to autophagosomes. Interacts with SURF4. Interacts with HNRNPA2B1. Interacts with ZDHHC1; ZDHHC1 constitutively interacts with STING1 and in presence of DNA viruses activates it by promoting its cGAMP-induced oligomerization and the recruitment of downstream signaling components. Interacts with ZDHHC11; in presence of DNA viruses promotes the recruitment of IRF3 to STING1. Interacts with TOMM70. Interacts with TAB1; promoting recruitment of TAB1 to the endoplasmic reticulum membrane and subsequent activation of MAP3K7/TAK1. Interacts (via transmembrane domain) with TMEM203. Interacts with DDX41. Phosphorylation by TBK1 leads to activation and production of IFN-beta. Following cyclic nucleotide (c-di-GMP or cGAMP)-binding, activation and translocation from the endoplasmic reticulum, STING1 is phosphorylated by TBK1 at Ser-366 in the pLxIS motif. The phosphorylated pLxIS motif constitutes an IRF3-binding motif, leading to recruitment of the transcription factor IRF3 to induce type-I interferons and other cytokines. Phosphorylated on tyrosine residues upon MHC-II aggregation. Dephosphorylation by PPP6C leads to inactivation and decreased production of IFN-beta. Phosphorylation at Ser-358 is also required to activate IRF3. Phosphorylation at Ser-355 by MAP3K7/TAK1 facilitates its interaction with STEEP1, promoting STING1 translocation to COPII vesicles. In terms of processing, ubiquitinated. Ubiquitinated via 'Lys-63'-linked ubiquitin chains in response to double-stranded DNA treatment, leading to relocalization to autophagosomes and subsequent degradation; this process is dependent on SQSTM1. 'Lys-63'-linked ubiquitination mediated by TRIM56 at Lys-151 promotes homodimerization and recruitment of the antiviral kinase TBK1 and subsequent production of IFN-beta. 'Lys-48'-linked polyubiquitination at Lys-151 occurring after viral infection is mediated by RNF5 and leads to proteasomal degradation. 'Lys-11'-linked polyubiquitination at Lys-151 by RNF26 leads to stabilize STING1: it protects STING1 from RNF5-mediated 'Lys-48'-linked polyubiquitination. 'Lys-33'-linked and 'Lys-48'-linked deubiquitinated by USP20; leading to its stabilization and promotion of innate antiviral response. 'Lys-48'-linked deubiquitinated by USP44; leading to its stabilization and promotion of innate antiviral response. Deubiquitinated by USP13; leading to inhibition of innate antiviral response. 'Lys-63'-linked deubiquitinated by USP49; leading to inhibition of the subsequent recruitment of TBK1 to the signaling complex. 'Lys-63'-linked ubiquitination mediated by RNF39 promotes the activation of the cGAS-STING pathway. Post-translationally, sumoylated at Lys-338 by TRIM38 during the early phase of viral infection, promoting its stability by preventing its relocalization to autophagosomes and subsequent degradation. Desumoylated by SENP2 during the late phase of viral infection. Palmitoylation takes place in the Golgi apparatus and creates a platform for the recruitment of TBK1.

Its subcellular location is the endoplasmic reticulum membrane. The protein resides in the cytoplasm. The protein localises to the perinuclear region. It is found in the endoplasmic reticulum-Golgi intermediate compartment membrane. It localises to the golgi apparatus membrane. Its subcellular location is the cytoplasmic vesicle. The protein resides in the autophagosome membrane. The protein localises to the mitochondrion outer membrane. It is found in the cell membrane. It catalyses the reaction H(+)(in) = H(+)(out). With respect to regulation, in contrast to mouse protein, not activated by anticancer molecule 5,6-dimethylxanthenone 4-acetic acid (DMXAA). Facilitator of innate immune signaling that acts as a sensor of cytosolic DNA from bacteria and viruses and promotes the production of type I interferon (IFN-alpha and IFN-beta). Innate immune response is triggered in response to non-CpG double-stranded DNA from viruses and bacteria delivered to the cytoplasm. Acts by binding cyclic dinucleotides: recognizes and binds cyclic di-GMP (c-di-GMP), a second messenger produced by bacteria, cyclic UMP-AMP (2',3'-cUAMP), and cyclic GMP-AMP (cGAMP), a messenger produced by CGAS in response to DNA virus in the cytosol. Upon binding to c-di-GMP, cUAMP or cGAMP, STING1 oligomerizes, translocates from the endoplasmic reticulum and is phosphorylated by TBK1 on the pLxIS motif, leading to recruitment and subsequent activation of the transcription factor IRF3 to induce expression of type I interferon and exert a potent anti-viral state. Exhibits 2',3' phosphodiester linkage-specific ligand recognition: can bind both 2'-3' linked cGAMP (2'-3'-cGAMP) and 3'-3' linked cGAMP but is preferentially activated by 2'-3' linked cGAMP. The preference for 2'-3'-cGAMP, compared to other linkage isomers is probably due to the ligand itself, whichs adopts an organized free-ligand conformation that resembles the STING1-bound conformation and pays low energy costs in changing into the active conformation. In addition to promote the production of type I interferons, plays a direct role in autophagy. Following cGAMP-binding, STING1 buds from the endoplasmic reticulum into COPII vesicles, which then form the endoplasmic reticulum-Golgi intermediate compartment (ERGIC). The ERGIC serves as the membrane source for WIPI2 recruitment and LC3 lipidation, leading to formation of autophagosomes that target cytosolic DNA or DNA viruses for degradation by the lysosome. Promotes autophagy by acting as a proton channel that directs proton efflux from the Golgi to facilitate MAP1LC3B/LC3B lipidation. The autophagy- and interferon-inducing activities can be uncoupled and autophagy induction is independent of TBK1 phosphorylation. Autophagy is also triggered upon infection by bacteria: following c-di-GMP-binding, which is produced by live Gram-positive bacteria, promotes reticulophagy. May be involved in translocon function, the translocon possibly being able to influence the induction of type I interferons. May be involved in transduction of apoptotic signals via its association with the major histocompatibility complex class II (MHC-II). The polypeptide is Stimulator of interferon genes protein (Rattus norvegicus (Rat)).